Here is a 319-residue protein sequence, read N- to C-terminus: 7,8-didemethyl-8-hydroxy-5-deazariboflavin synthase (319 aa).

The region spanning 6 to 236 is the Radical SAM core domain; it reads VTYSPAFTLV…AEITIQIPPN (231 aa). [4Fe-4S] cluster-binding residues include Cys20, Cys24, and Cys27.

This sequence belongs to the radical SAM superfamily. CofG family. As to quaternary structure, consists of two subunits, CofG and CofH. It depends on [4Fe-4S] cluster as a cofactor.

The catalysed reaction is 5-amino-5-(4-hydroxybenzyl)-6-(D-ribitylimino)-5,6-dihydrouracil + S-adenosyl-L-methionine = 7,8-didemethyl-8-hydroxy-5-deazariboflavin + 5'-deoxyadenosine + L-methionine + NH4(+) + H(+). The protein operates within cofactor biosynthesis; coenzyme F0 biosynthesis. Its function is as follows. Catalyzes the radical-mediated synthesis of 7,8-didemethyl-8-hydroxy-5-deazariboflavin from 5-amino-5-(4-hydroxybenzyl)-6-(D-ribitylimino)-5,6-dihydrouracil. This is 7,8-didemethyl-8-hydroxy-5-deazariboflavin synthase from Gloeobacter violaceus (strain ATCC 29082 / PCC 7421).